The following is a 115-amino-acid chain: NAD(P)H-quinone oxidoreductase subunit M (115 aa).

Belongs to the complex I NdhM subunit family. In terms of assembly, NDH-1 can be composed of about 15 different subunits; different subcomplexes with different compositions have been identified which probably have different functions.

Its subcellular location is the cellular thylakoid membrane. It carries out the reaction a plastoquinone + NADH + (n+1) H(+)(in) = a plastoquinol + NAD(+) + n H(+)(out). It catalyses the reaction a plastoquinone + NADPH + (n+1) H(+)(in) = a plastoquinol + NADP(+) + n H(+)(out). Its function is as follows. NDH-1 shuttles electrons from an unknown electron donor, via FMN and iron-sulfur (Fe-S) centers, to quinones in the respiratory and/or the photosynthetic chain. The immediate electron acceptor for the enzyme in this species is believed to be plastoquinone. Couples the redox reaction to proton translocation, and thus conserves the redox energy in a proton gradient. Cyanobacterial NDH-1 also plays a role in inorganic carbon-concentration. This Prochlorococcus marinus (strain NATL2A) protein is NAD(P)H-quinone oxidoreductase subunit M.